A 385-amino-acid chain; its full sequence is MYVRHLGLRDFRSWAHADLELQPGRTVFIGSNGFGKTNLLEALWYSSTLGSHRVGTDAPLIRAGADRTVVSTIVVNDGRECAVDLEIAAGRANKARLNRSPVRSTREVLGVLRAVLFAPEDLALVRGDPSERRRYLDDLATLRRPAIAAVRADYDKVLRQRTALLKSLSGARHRGDRGALDTLDVWDSRLAEYGAQLMAARIDLVNQLAPEVEKAYQLLAPGSRAASIGYRSSLGAAAAAEVNAGDRDYLEAALLAGLAARRYAELERGVCLVGPHRDDLELWLGEQVAKGFASHGESWSLALSLRLAAYELLRADESDPVLLLDDVFAELDAARRRALAAVAESAEQVLVTAAVLEDIPAGWQARRLFVELRDTDAGRVSELRP.

30 to 37 serves as a coordination point for ATP; it reads GSNGFGKT.

It belongs to the RecF family.

The protein resides in the cytoplasm. Its function is as follows. The RecF protein is involved in DNA metabolism; it is required for DNA replication and normal SOS inducibility. RecF binds preferentially to single-stranded, linear DNA. It also seems to bind ATP. In Mycobacterium avium (strain 104), this protein is DNA replication and repair protein RecF.